The chain runs to 145 residues: Putative pre-16S rRNA nuclease (145 aa).

Belongs to the YqgF nuclease family.

It localises to the cytoplasm. In terms of biological role, could be a nuclease involved in processing of the 5'-end of pre-16S rRNA. The chain is Putative pre-16S rRNA nuclease from Limosilactobacillus fermentum (strain NBRC 3956 / LMG 18251) (Lactobacillus fermentum).